Reading from the N-terminus, the 402-residue chain is Argininosuccinate synthase (402 aa).

An ATP-binding site is contributed by 9–17 (AYSGGLDTS). Y86 contacts L-citrulline. Position 116 (G116) interacts with ATP. L-aspartate is bound by residues T118, N122, and D123. N122 contacts L-citrulline. R126, S174, S183, E259, and Y271 together coordinate L-citrulline.

Belongs to the argininosuccinate synthase family. Type 1 subfamily. As to quaternary structure, homotetramer.

It localises to the cytoplasm. It catalyses the reaction L-citrulline + L-aspartate + ATP = 2-(N(omega)-L-arginino)succinate + AMP + diphosphate + H(+). Its pathway is amino-acid biosynthesis; L-arginine biosynthesis; L-arginine from L-ornithine and carbamoyl phosphate: step 2/3. This Geobacillus sp. (strain WCH70) protein is Argininosuccinate synthase.